A 1588-amino-acid chain; its full sequence is Paternally-expressed gene 3 protein (1588 aa).

The 83-residue stretch at His-46–Tyr-128 folds into the SCAN box domain. 3 disordered regions span residues Tyr-128–Val-231, Gly-265–Ile-304, and Lys-317–Asp-347. Residues Gln-129 to Asp-142 are compositionally biased toward acidic residues. Basic and acidic residues-rich tracts occupy residues Asp-143–Ser-152, Phe-160–Ser-181, Phe-205–Asp-224, and Pro-293–Ile-304. 3 C2H2-type zinc fingers span residues Tyr-452–His-474, Phe-505–His-527, and Tyr-563–His-585. Residues Asp-588–Thr-607 are compositionally biased toward basic and acidic residues. A disordered region spans residues Asp-588–Phe-608. Residues Tyr-627–His-649 form a C2H2-type 4 zinc finger. 2 disordered regions span residues Val-839–Arg-889 and Gln-905–Val-929. A compositionally biased stretch (basic and acidic residues) spans Leu-868–Pro-881. A C2H2-type 5 zinc finger spans residues Tyr-969 to His-991. The disordered stretch occupies residues Glu-1056–Asp-1104. The segment covering Glu-1071 to Glu-1082 has biased composition (basic and acidic residues). C2H2-type zinc fingers lie at residues Tyr-1107 to His-1129, Tyr-1163 to His-1185, Ile-1225 to His-1247, Phe-1282 to His-1304, and Tyr-1332 to His-1354. Residues Glu-1396 to Ala-1415 show a composition bias toward acidic residues. The tract at residues Glu-1396–Asp-1495 is disordered. Tandem repeats lie at residues Pro-1397–Glu-1403, Pro-1404–Glu-1410, Pro-1411–Glu-1417, Pro-1418–Ala-1422, Pro-1425–Ala-1429, Pro-1432–Ala-1436, and Pro-1439–Ala-1443. The 3 X 7 AA repeat of P-E-V-E-A-A-E stretch occupies residues Pro-1397–Glu-1417. Positions Pro-1418–Ala-1443 are 4 X 5 AA repeat of P-X-G-E-A. Acidic residues-rich tracts occupy residues Asp-1449 to Glu-1466 and Pro-1475 to Asp-1495. 2 consecutive C2H2-type zinc fingers follow at residues Tyr-1505–His-1527 and Phe-1564–His-1586.

Belongs to the krueppel C2H2-type zinc-finger protein family. As to quaternary structure, homodimer. Interacts with SIAH1A and SIAH2. Interacts with TRAF2. As to expression, brain, glial cells, astrocytes, embryo, placenta, testis, ovary and uterus. In the placenta it is found in the layer of villous cytotrophoblast cells while in the ovary it is found in the cells of the ovarian stroma including the thecal layers around the follicles. Expression is highly repressed in glioma cell lines.

It is found in the nucleus. Its subcellular location is the cytoplasm. Induces apoptosis in cooperation with SIAH1A. Acts as a mediator between p53/TP53 and BAX in a neuronal death pathway that is activated by DNA damage. Acts synergistically with TRAF2 and inhibits TNF induced apoptosis through activation of NF-kappa-B. Possesses a tumor suppressing activity in glioma cells. This Homo sapiens (Human) protein is Paternally-expressed gene 3 protein (PEG3).